A 396-amino-acid polypeptide reads, in one-letter code: NADH-quinone oxidoreductase subunit D (396 aa).

The protein belongs to the complex I 49 kDa subunit family. NDH-1 is composed of 14 different subunits. Subunits NuoB, C, D, E, F, and G constitute the peripheral sector of the complex.

Its subcellular location is the cell inner membrane. The enzyme catalyses a quinone + NADH + 5 H(+)(in) = a quinol + NAD(+) + 4 H(+)(out). In terms of biological role, NDH-1 shuttles electrons from NADH, via FMN and iron-sulfur (Fe-S) centers, to quinones in the respiratory chain. The immediate electron acceptor for the enzyme in this species is believed to be ubiquinone. Couples the redox reaction to proton translocation (for every two electrons transferred, four hydrogen ions are translocated across the cytoplasmic membrane), and thus conserves the redox energy in a proton gradient. In Brucella anthropi (strain ATCC 49188 / DSM 6882 / CCUG 24695 / JCM 21032 / LMG 3331 / NBRC 15819 / NCTC 12168 / Alc 37) (Ochrobactrum anthropi), this protein is NADH-quinone oxidoreductase subunit D.